The primary structure comprises 381 residues: Cytochrome b (381 aa).

The next 4 membrane-spanning stretches (helical) occupy residues 32 to 52 (GGSL…LLAM), 76 to 98 (MILR…LHVL), 113 to 133 (VWIS…IGYV), and 179 to 199 (FYSF…FHIA). 2 residues coordinate heme b: H82 and H96. Positions 183 and 197 each coordinate heme b. Residue H202 participates in a ubiquinone binding. 4 helical membrane-spanning segments follow: residues 225-245 (FGAK…ILVF), 289-309 (AMGV…PFIG), 318-338 (ITEW…WLGG), and 345-365 (TSFV…VCQP).

It belongs to the cytochrome b family. In terms of assembly, the main subunits of complex b-c1 are: cytochrome b, cytochrome c1 and the Rieske protein. It depends on heme b as a cofactor.

Its subcellular location is the mitochondrion inner membrane. In terms of biological role, component of the ubiquinol-cytochrome c reductase complex (complex III or cytochrome b-c1 complex) that is part of the mitochondrial respiratory chain. The b-c1 complex mediates electron transfer from ubiquinol to cytochrome c. Contributes to the generation of a proton gradient across the mitochondrial membrane that is then used for ATP synthesis. The sequence is that of Cytochrome b (MT-CYB) from Chlamydomonas reinhardtii (Chlamydomonas smithii).